A 743-amino-acid chain; its full sequence is 1,4-alpha-glucan branching enzyme GlgB 2 (743 aa).

The disordered stretch occupies residues 1-23 (MSERQGGQEQRTEADGMTTEGIS). Asp422 (nucleophile) is an active-site residue. The Proton donor role is filled by Glu475.

Belongs to the glycosyl hydrolase 13 family. GlgB subfamily. Monomer.

It catalyses the reaction Transfers a segment of a (1-&gt;4)-alpha-D-glucan chain to a primary hydroxy group in a similar glucan chain.. The protein operates within glycan biosynthesis; glycogen biosynthesis. Its function is as follows. Catalyzes the formation of the alpha-1,6-glucosidic linkages in glycogen by scission of a 1,4-alpha-linked oligosaccharide from growing alpha-1,4-glucan chains and the subsequent attachment of the oligosaccharide to the alpha-1,6 position. The polypeptide is 1,4-alpha-glucan branching enzyme GlgB 2 (Xanthomonas euvesicatoria pv. vesicatoria (strain 85-10) (Xanthomonas campestris pv. vesicatoria)).